A 466-amino-acid polypeptide reads, in one-letter code: Asparagine--tRNA ligase (466 aa).

Belongs to the class-II aminoacyl-tRNA synthetase family. Homodimer.

It localises to the cytoplasm. The enzyme catalyses tRNA(Asn) + L-asparagine + ATP = L-asparaginyl-tRNA(Asn) + AMP + diphosphate + H(+). The polypeptide is Asparagine--tRNA ligase (Shewanella baltica (strain OS195)).